A 222-amino-acid polypeptide reads, in one-letter code: Putative ankyrin repeat protein L36 (222 aa).

7 ANK repeats span residues 1–14 (MVKY…NVDA), 15–44 (QNSR…NIYA), 45–74 (NDNH…NIRA), 76–104 (EDSA…TNYE), 105–134 (YSDY…KITD), 136–161 (AMFM…SLPC), and 163–191 (SYSE…KINK).

This Acanthamoeba polyphaga (Amoeba) protein is Putative ankyrin repeat protein L36.